A 110-amino-acid polypeptide reads, in one-letter code: Small ribosomal subunit protein uS10 (110 aa).

Belongs to the universal ribosomal protein uS10 family. As to quaternary structure, part of the 30S ribosomal subunit.

Involved in the binding of tRNA to the ribosomes. The polypeptide is Small ribosomal subunit protein uS10 (Ehrlichia ruminantium (strain Gardel)).